Reading from the N-terminus, the 125-residue chain is Snaclec B6 (125 aa).

Cystine bridges form between Cys2–Cys13, Cys30–Cys119, and Cys96–Cys111. The C-type lectin domain maps to His9–Gln120. Asn95 carries an N-linked (GlcNAc...) asparagine glycan. A glycan (N-linked (GlcNAc...) asparagine) is linked at Asn112.

It belongs to the snaclec family. As to quaternary structure, heterodimer; disulfide-linked. In terms of tissue distribution, expressed by the venom gland.

It localises to the secreted. Functionally, interferes with one step of hemostasis (modulation of platelet aggregation, or coagulation cascade, for example). The polypeptide is Snaclec B6 (Macrovipera lebetinus (Levantine viper)).